The following is a 422-amino-acid chain: Zinc finger and BTB domain-containing protein 42 (422 aa).

The 69-residue stretch at 24 to 92 folds into the BTB domain; that stretch reads CDCTVLVGDA…MYEGRLDLRS (69 aa). Disordered stretches follow at residues 121–141, 166–188, and 207–256; these read KDRS…QPPC, AALP…DQAL, and LQTP…AAKG. The span at 243–252 shows a compositional bias: pro residues; it reads HSPPKPPPVP. C2H2-type zinc fingers lie at residues 294–316, 334–356, 362–384, and 390–413; these read CICP…LSAH, PTCP…ERTH, YTCV…TVVH, and HACR…RKFH.

This sequence belongs to the krueppel C2H2-type zinc-finger protein family. ZBTB18 subfamily. As to expression, expressed in skeletal muscle (at protein level).

It localises to the cytoplasm. Its subcellular location is the nucleus. The protein resides in the nucleoplasm. In terms of biological role, transcriptional repressor. Specifically binds DNA and probably acts by recruiting chromatin remodeling multiprotein complexes. This chain is Zinc finger and BTB domain-containing protein 42 (ZBTB42), found in Homo sapiens (Human).